An 88-amino-acid polypeptide reads, in one-letter code: uncharacterized protein (88 aa).

The signal sequence occupies residues 1-25 (MRAAFWVGCAALLLSACSSEPVQQA).

This is an uncharacterized protein from Escherichia coli O6:H1 (strain CFT073 / ATCC 700928 / UPEC).